A 471-amino-acid polypeptide reads, in one-letter code: 3-isopropylmalate dehydratase large subunit (471 aa).

Residues Cys349, Cys409, and Cys412 each coordinate [4Fe-4S] cluster.

It belongs to the aconitase/IPM isomerase family. LeuC type 1 subfamily. As to quaternary structure, heterodimer of LeuC and LeuD. Requires [4Fe-4S] cluster as cofactor.

The catalysed reaction is (2R,3S)-3-isopropylmalate = (2S)-2-isopropylmalate. The protein operates within amino-acid biosynthesis; L-leucine biosynthesis; L-leucine from 3-methyl-2-oxobutanoate: step 2/4. In terms of biological role, catalyzes the isomerization between 2-isopropylmalate and 3-isopropylmalate, via the formation of 2-isopropylmaleate. The chain is 3-isopropylmalate dehydratase large subunit from Aliivibrio fischeri (strain ATCC 700601 / ES114) (Vibrio fischeri).